A 110-amino-acid polypeptide reads, in one-letter code: Large ribosomal subunit protein P2 (110 aa).

Positions 63 to 110 (ASVPSGGGVAAAAPAAGGGGADPAEAKEEKKEEPEEESDDDMGFGLFD) are disordered. Residues 86 to 95 (AEAKEEKKEE) show a composition bias toward basic and acidic residues.

It belongs to the eukaryotic ribosomal protein P1/P2 family. In terms of assembly, P1 and P2 exist as dimers at the large ribosomal subunit. Post-translationally, phosphorylated.

Functionally, plays an important role in the elongation step of protein synthesis. This Cryptochiton stelleri (Giant gumboot chiton) protein is Large ribosomal subunit protein P2.